The primary structure comprises 120 residues: Large ribosomal subunit protein bL17 (120 aa).

It belongs to the bacterial ribosomal protein bL17 family. Part of the 50S ribosomal subunit. Contacts protein L32.

This chain is Large ribosomal subunit protein bL17, found in Mesomycoplasma hyopneumoniae (strain 232) (Mycoplasma hyopneumoniae).